The following is a 493-amino-acid chain: Beta-amyrin 11-oxidase (493 aa).

The helical transmembrane segment at 7–23 threads the bilayer; the sequence is CMSAATLLVCYIFGSKF. Cys-439 serves as a coordination point for heme.

The protein belongs to the cytochrome P450 family. Requires heme as cofactor. In terms of tissue distribution, expressed in roots and stolons. Not detected in leaves and stems.

The protein resides in the membrane. The catalysed reaction is beta-amyrin + 2 reduced [NADPH--hemoprotein reductase] + 2 O2 = 11-oxo-beta-amyrin + 2 oxidized [NADPH--hemoprotein reductase] + 3 H2O + 2 H(+). It carries out the reaction beta-amyrin + reduced [NADPH--hemoprotein reductase] + O2 = 11alpha-hydroxy-beta-amyrin + oxidized [NADPH--hemoprotein reductase] + H2O + H(+). It catalyses the reaction 11alpha-hydroxy-beta-amyrin + reduced [NADPH--hemoprotein reductase] + O2 = 11-oxo-beta-amyrin + oxidized [NADPH--hemoprotein reductase] + 2 H2O + H(+). Functionally, involved in the biosynthesis of Glycyrrhetinic acid (GA), a natural product which exhibits anti-inflammatory activity. Catalyzes 2 successive oxidations of beta-amyrin, producing a precursor of the triterpene sweetener glycyrrhizin. Unable to use 11-deoxoglycyrrhetinic acid or ent-kaurenoic acid as substrates. The chain is Beta-amyrin 11-oxidase from Glycyrrhiza uralensis (Chinese licorice).